Reading from the N-terminus, the 445-residue chain is Trigger factor (445 aa).

Positions 163–248 (GDTVVIDYVG…IHEVKVKELP (86 aa)) constitute a PPIase FKBP-type domain. Residues 425-445 (KEVESAKDDADKEASDAKADK) form a disordered region.

This sequence belongs to the FKBP-type PPIase family. Tig subfamily.

It localises to the cytoplasm. The enzyme catalyses [protein]-peptidylproline (omega=180) = [protein]-peptidylproline (omega=0). Its function is as follows. Involved in protein export. Acts as a chaperone by maintaining the newly synthesized protein in an open conformation. Functions as a peptidyl-prolyl cis-trans isomerase. The protein is Trigger factor of Lacticaseibacillus casei (strain BL23) (Lactobacillus casei).